A 139-amino-acid chain; its full sequence is Acidic phospholipase A2 DE-I (139 aa).

An N-terminal signal peptide occupies residues 1 to 16 (MRTLWIMAVLLLGVEG). Intrachain disulfides connect Cys-42-Cys-132, Cys-44-Cys-60, Cys-59-Cys-111, Cys-65-Cys-139, Cys-66-Cys-104, Cys-73-Cys-97, and Cys-91-Cys-102. Residues Tyr-43, Gly-45, and Gly-47 each contribute to the Ca(2+) site. His-63 is an active-site residue. Asp-64 provides a ligand contact to Ca(2+). The active site involves Asp-105.

Requires Ca(2+) as cofactor. In terms of tissue distribution, expressed by the venom gland.

It localises to the secreted. It catalyses the reaction a 1,2-diacyl-sn-glycero-3-phosphocholine + H2O = a 1-acyl-sn-glycero-3-phosphocholine + a fatty acid + H(+). In terms of biological role, snake venom phospholipase A2 (PLA2) that inhibits the ADP- and collagen-induced human platelet aggregation. Exhibits high hydrolytic activities and preferred the anionic micelles to the zwitterionic micelles. PLA2 catalyzes the calcium-dependent hydrolysis of the 2-acyl groups in 3-sn-phosphoglycerides. This is Acidic phospholipase A2 DE-I from Ovophis okinavensis (Ryukyu Island pit viper).